The following is a 57-amino-acid chain: RPSFCNLPVKPGPCSGFFSAFYYSQKTNKCHSFTYGGCRGNGNRFRTIEECRRTCVG.

The 51-residue stretch at 5–55 (CNLPVKPGPCSGFFSAFYYSQKTNKCHSFTYGGCRGNGNRFRTIEECRRTC) folds into the BPTI/Kunitz inhibitor domain. Intrachain disulfides connect Cys5–Cys55, Cys14–Cys38, and Cys30–Cys51.

This sequence belongs to the venom Kunitz-type family. In terms of tissue distribution, expressed by the venom gland.

Its subcellular location is the secreted. Its function is as follows. Interacts with vasopressin V2 receptor (V2R/AVPR2), probably in a selective manner. Inhibits vasopressin binding human V2R in the nanomolar range (Ki=7.34 nM), and also potently inhibits vasopressin-induced cAMP production (IC(50)=26 nM). In vivo, intraperitoneal injection of this protein into rats increases diuresis by 8.6-fold, without any loss of electrolytes. The chain is Mambaquaretin-4 from Dendroaspis viridis (Western green mamba).